The chain runs to 195 residues: Ribonuclease HII (195 aa).

The RNase H type-2 domain occupies 6–195 (SLIAGVDEVG…KSFISRLKKN (190 aa)). Residues Asp12, Glu13, and Asp108 each contribute to the a divalent metal cation site.

This sequence belongs to the RNase HII family. Mn(2+) is required as a cofactor. Requires Mg(2+) as cofactor.

The protein localises to the cytoplasm. It carries out the reaction Endonucleolytic cleavage to 5'-phosphomonoester.. In terms of biological role, endonuclease that specifically degrades the RNA of RNA-DNA hybrids. This Prochlorococcus marinus (strain NATL2A) protein is Ribonuclease HII.